We begin with the raw amino-acid sequence, 677 residues long: DNA ligase (677 aa).

NAD(+) is bound by residues Asp-34–Asp-38, Ser-83–Leu-84, and Glu-115. Catalysis depends on Lys-117, which acts as the N6-AMP-lysine intermediate. Arg-138, Glu-180, Lys-297, and Lys-321 together coordinate NAD(+). The Zn(2+) site is built by Cys-416, Cys-419, Cys-434, and Cys-439. Residues Lys-596–Ala-677 enclose the BRCT domain.

It belongs to the NAD-dependent DNA ligase family. LigA subfamily. It depends on Mg(2+) as a cofactor. Mn(2+) serves as cofactor.

The catalysed reaction is NAD(+) + (deoxyribonucleotide)n-3'-hydroxyl + 5'-phospho-(deoxyribonucleotide)m = (deoxyribonucleotide)n+m + AMP + beta-nicotinamide D-nucleotide.. DNA ligase that catalyzes the formation of phosphodiester linkages between 5'-phosphoryl and 3'-hydroxyl groups in double-stranded DNA using NAD as a coenzyme and as the energy source for the reaction. It is essential for DNA replication and repair of damaged DNA. This Acidobacterium capsulatum (strain ATCC 51196 / DSM 11244 / BCRC 80197 / JCM 7670 / NBRC 15755 / NCIMB 13165 / 161) protein is DNA ligase.